The sequence spans 521 residues: Cyclic AMP-responsive element-binding protein 3-like protein 2 (521 aa).

Over Met1 to Thr378 the chain is Cytoplasmic. A compositionally biased stretch (polar residues) spans Tyr83–Ser103. Residues Tyr83–Asp106 are disordered. The residue at position 93 (Ser93) is a Phosphoserine. Residue Lys178 forms a Glycyl lysine isopeptide (Lys-Gly) (interchain with G-Cter in SUMO2) linkage. A Phosphoserine modification is found at Ser191. Positions Ser196–Leu264 are disordered. A compositionally biased stretch (low complexity) spans Ser208–Pro220. The bZIP domain occupies Ala294–Leu357. The basic motif stretch occupies residues Lys296–Lys325. Residues Leu336–Leu357 are leucine-zipper. Residues Cys379–Gly399 form a helical; Signal-anchor for type II membrane protein membrane-spanning segment. The Lumenal portion of the chain corresponds to Pro400–Phe521. Positions Arg427 to Leu430 match the S1P recognition motif. Asn481, Asn505, and Asn518 each carry an N-linked (GlcNAc...) asparagine glycan.

Belongs to the bZIP family. ATF subfamily. Binds DNA as a dimer. Upon ER stress, translocated to the Golgi apparatus, where it is processed by regulated intramembrane proteolysis (RIP) to release the cytosol-facing N-terminal transcription factor domain. The cleavage is performed sequentially by site-1 and site-2 proteases (S1P/MBTPS1 and S2P/MBTPS2). Post-translationally, N-glycosylated. In terms of processing, ubiquitinated by HRD1/SYVN1; undergoes 'Lys-48'-linked ubiquitination, followed by rapid proteasomal degradation under normal conditions. Upon ER stress, SYVN1 E3 ubiquitin-protein ligase dissociates from its substrate, ubiquitination does not occur and CREB3L2 is stabilized. Widely expressed, including in lung, bladder, ovary, testis and spleen. Highly expressed in chondrocytes.

It is found in the endoplasmic reticulum membrane. The protein localises to the nucleus. Functionally, transcription factor involved in unfolded protein response (UPR). In the absence of endoplasmic reticulum (ER) stress, inserted into ER membranes, with N-terminal DNA-binding and transcription activation domains oriented toward the cytosolic face of the membrane. In response to ER stress, transported to the Golgi, where it is cleaved in a site-specific manner by resident proteases S1P/MBTPS1 and S2P/MBTPS2. The released N-terminal cytosolic domain is translocated to the nucleus to effect transcription of specific target genes. Plays a critical role in chondrogenesis by activating the transcription of SEC23A, which promotes the transport and secretion of cartilage matrix proteins, and possibly that of ER biogenesis-related genes. In a neuroblastoma cell line, protects cells from ER stress-induced death. In vitro activates transcription of target genes via direct binding to the CRE site. The sequence is that of Cyclic AMP-responsive element-binding protein 3-like protein 2 (Creb3l2) from Mus musculus (Mouse).